Consider the following 493-residue polypeptide: Isoniazid-induced protein IniC (493 aa).

The sequence is that of Isoniazid-induced protein IniC (iniC) from Mycobacterium tuberculosis (strain CDC 1551 / Oshkosh).